The following is a 353-amino-acid chain: DNA replication and repair protein RecF (353 aa).

Gly-30–Thr-37 contacts ATP.

It belongs to the RecF family.

Its subcellular location is the cytoplasm. In terms of biological role, the RecF protein is involved in DNA metabolism; it is required for DNA replication and normal SOS inducibility. RecF binds preferentially to single-stranded, linear DNA. It also seems to bind ATP. This chain is DNA replication and repair protein RecF, found in Carboxydothermus hydrogenoformans (strain ATCC BAA-161 / DSM 6008 / Z-2901).